The chain runs to 474 residues: Protein U79/U80 (474 aa).

2 stretches are compositionally biased toward basic and acidic residues: residues D156–R165 and R175–K219. Disordered regions lie at residues D156–K219 and S412–Q441. Positions G417–N432 are enriched in basic residues.

This sequence belongs to the herpesviridae U79/UL112 family.

It is found in the host nucleus. Its function is as follows. May be involved in DNA replication. In Homo sapiens (Human), this protein is Protein U79/U80 (U79/U80).